A 324-amino-acid polypeptide reads, in one-letter code: MSVEDGGMPGLGRPRQARWTLMLLLSTAMYGAHAPLLALCHVDGRVPFRPSSAVLLTELTKLLLCAFSLLVGWQAWPQGPPPWRQAAPFALSALLYGANNNLVIYLQRYMDPSTYQVLSNLKIGSTAVLYCLCLRHRLSVRQGLALLLLMAAGACYAAGGLQVPGNTLPSPPPAAAASPMPLHITPLGLLLLILYCLISGLSSVYTELLMKRQRLPLALQNLFLYTFGVLLNLGLHAGGGSGPGLLEGFSGWAALVVLSQALNGLLMSAVMKHGSSITRLFVVSCSLVVNAVLSAVLLRLQLTAAFFLATLLIGLAMRLYYGSR.

Over M1–R18 the chain is Cytoplasmic. Residues W19–L39 traverse the membrane as a helical segment. Residues C40 to S52 lie on the Lumenal side of the membrane. The helical transmembrane segment at A53–W73 threads the bilayer. The Cytoplasmic portion of the chain corresponds to Q74–Q85. A helical membrane pass occupies residues A86–L106. Residues Q107 to Q142 lie on the Lumenal side of the membrane. A helical transmembrane segment spans residues G143–V163. The Cytoplasmic segment spans residues P164–M180. The helical transmembrane segment at P181–L201 threads the bilayer. The Lumenal portion of the chain corresponds to S202–R214. A helical transmembrane segment spans residues L215 to L235. Over H236–S250 the chain is Cytoplasmic. Residues G251 to M271 form a helical membrane-spanning segment. Topologically, residues K272–S275 are lumenal. Residues S276–L298 traverse the membrane as a helical segment. Residues R299 to R324 lie on the Cytoplasmic side of the membrane.

The protein belongs to the nucleotide-sugar transporter family. SLC35A subfamily. Found in a complex with SLC35A2 and SLC35A3.

Its subcellular location is the golgi apparatus membrane. It catalyses the reaction CDP-L-ribitol(in) + CDP(out) = CDP-L-ribitol(out) + CDP(in). Mediates the transport of CDP-ribitol. Does not exhibit CMP-sialic acid, UDP-galactose and UDP-N-acetylglucosamine transport activity. This Homo sapiens (Human) protein is Probable UDP-sugar transporter protein SLC35A4.